The chain runs to 388 residues: Chalcone synthase LF3 (388 aa).

Cysteine 164 is a catalytic residue.

The protein belongs to the thiolase-like superfamily. Chalcone/stilbene synthases family.

The catalysed reaction is (E)-4-coumaroyl-CoA + 3 malonyl-CoA + 3 H(+) = 2',4,4',6'-tetrahydroxychalcone + 3 CO2 + 4 CoA. The protein operates within secondary metabolite biosynthesis; flavonoid biosynthesis. Its function is as follows. The primary product of this enzyme is 4,2',4',6'-tetrahydroxychalcone (also termed naringenin-chalcone or chalcone) which can under specific conditions spontaneously isomerize into naringenin. The chain is Chalcone synthase LF3 (CHS-LF3) from Ipomoea batatas (Sweet potato).